The sequence spans 61 residues: Small ribosomal subunit protein uS14 (61 aa).

Residues C24, C27, C40, and C43 each coordinate Zn(2+).

This sequence belongs to the universal ribosomal protein uS14 family. Zinc-binding uS14 subfamily. Part of the 30S ribosomal subunit. Contacts proteins S3 and S10. Zn(2+) serves as cofactor.

Binds 16S rRNA, required for the assembly of 30S particles and may also be responsible for determining the conformation of the 16S rRNA at the A site. In Clostridium novyi (strain NT), this protein is Small ribosomal subunit protein uS14.